The chain runs to 292 residues: Glycine--tRNA ligase alpha subunit (292 aa).

The protein belongs to the class-II aminoacyl-tRNA synthetase family. Tetramer of two alpha and two beta subunits.

The protein resides in the cytoplasm. It carries out the reaction tRNA(Gly) + glycine + ATP = glycyl-tRNA(Gly) + AMP + diphosphate. The sequence is that of Glycine--tRNA ligase alpha subunit from Synechococcus elongatus (strain ATCC 33912 / PCC 7942 / FACHB-805) (Anacystis nidulans R2).